A 681-amino-acid polypeptide reads, in one-letter code: Minichromosome maintenance domain-containing protein 2 (681 aa).

Serine 292 is subject to Phosphoserine. Residues 533 to 621 (RQFTTEDFEK…LIAALLFETS (89 aa)) enclose the MCM domain.

In terms of biological role, plays an important role in meiotic recombination and associated DNA double-strand break repair. The chain is Minichromosome maintenance domain-containing protein 2 (MCMDC2) from Homo sapiens (Human).